Consider the following 660-residue polypeptide: Protein translocase subunit SecA 2 (660 aa).

Residues Gln113, 131–135, and Asp539 each bind ATP; that span reads GEGKT.

The protein belongs to the SecA family. As to quaternary structure, monomer and homodimer. Part of the essential Sec protein translocation apparatus which comprises SecA, SecYEG and auxiliary proteins SecDF-YajC and YidC.

Its subcellular location is the cell inner membrane. The protein localises to the cytoplasm. It catalyses the reaction ATP + H2O + cellular proteinSide 1 = ADP + phosphate + cellular proteinSide 2.. In terms of biological role, part of the Sec protein translocase complex. Interacts with the SecYEG preprotein conducting channel. Has a central role in coupling the hydrolysis of ATP to the transfer of proteins into and across the cell membrane, serving both as a receptor for the preprotein-SecB complex and as an ATP-driven molecular motor driving the stepwise translocation of polypeptide chains across the membrane. The polypeptide is Protein translocase subunit SecA 2 (Bordetella avium (strain 197N)).